A 201-amino-acid polypeptide reads, in one-letter code: Transcriptional regulator GfcR (201 aa).

The protein belongs to the purine/pyrimidine phosphoribosyltransferase family. GfcR subfamily.

The sequence is that of Transcriptional regulator GfcR from Methanobrevibacter smithii (strain ATCC 35061 / DSM 861 / OCM 144 / PS).